A 104-amino-acid chain; its full sequence is Ig lambda-2 chain C region (104 aa).

Positions 6–99 constitute an Ig-like domain; it reads PTLTVFPPST…EGNTVEKSLS (94 aa). A disulfide bridge links C27 with C85.

This is Ig lambda-2 chain C region from Rattus norvegicus (Rat).